A 22-amino-acid chain; its full sequence is Bacteriocin serracin-P 23 kDa subunit (22 aa).

Its function is as follows. Major component of a prophage tail tube. In terms of biological role, antibacterial activity against Gram-negative bacterium E.amylovora. The protein is Bacteriocin serracin-P 23 kDa subunit of Serratia plymuthica.